The sequence spans 243 residues: ATP-dependent dethiobiotin synthetase BioD (243 aa).

An ATP-binding site is contributed by 12–17 (DVGKTF). Thr16 provides a ligand contact to Mg(2+). Lys37 is a catalytic residue. Ser41 serves as a coordination point for substrate. Residues Asp54, 115-118 (EGCG), and 179-180 (NM) contribute to the ATP site. Asp54 and Glu115 together coordinate Mg(2+).

Belongs to the dethiobiotin synthetase family. As to quaternary structure, homodimer. Requires Mg(2+) as cofactor.

It is found in the cytoplasm. The catalysed reaction is (7R,8S)-7,8-diammoniononanoate + CO2 + ATP = (4R,5S)-dethiobiotin + ADP + phosphate + 3 H(+). It participates in cofactor biosynthesis; biotin biosynthesis; biotin from 7,8-diaminononanoate: step 1/2. Catalyzes a mechanistically unusual reaction, the ATP-dependent insertion of CO2 between the N7 and N8 nitrogen atoms of 7,8-diaminopelargonic acid (DAPA, also called 7,8-diammoniononanoate) to form a ureido ring. The sequence is that of ATP-dependent dethiobiotin synthetase BioD from Caldicellulosiruptor bescii (strain ATCC BAA-1888 / DSM 6725 / KCTC 15123 / Z-1320) (Anaerocellum thermophilum).